We begin with the raw amino-acid sequence, 397 residues long: Ribosomal RNA large subunit methyltransferase I (397 aa).

In terms of domain architecture, PUA spans alanine 2 to phenylalanine 80.

Belongs to the methyltransferase superfamily. RlmI family.

The protein localises to the cytoplasm. It carries out the reaction cytidine(1962) in 23S rRNA + S-adenosyl-L-methionine = 5-methylcytidine(1962) in 23S rRNA + S-adenosyl-L-homocysteine + H(+). In terms of biological role, specifically methylates the cytosine at position 1962 (m5C1962) of 23S rRNA. The sequence is that of Ribosomal RNA large subunit methyltransferase I from Shewanella denitrificans (strain OS217 / ATCC BAA-1090 / DSM 15013).